The following is an 85-amino-acid chain: Kunitz-type serine protease inhibitor homolog beta-bungarotoxin BF B1 chain (85 aa).

The N-terminal stretch at 1-24 is a signal peptide; sequence MSSGGLLLLLGLLTLWTELTPVSS. The BPTI/Kunitz inhibitor domain maps to 31-81; sequence CDKPPDTGRCRKNVRAFYYKPSAKRCVQFIYGGCNANGNHFKSDHLCRCEC. 3 disulfide bridges follow: Cys31-Cys81, Cys40-Cys64, and Cys56-Cys77.

It belongs to the venom Kunitz-type family. In terms of assembly, heterodimer; disulfide-linked. The A chains have phospholipase A2 activity and the B chains show homology with the basic protease inhibitors. As to expression, expressed by the venom gland.

The protein resides in the secreted. In terms of biological role, beta-1-bungarotoxin is a presynaptic neurotoxin of the venom. The B chain is homologous to venom basic protease inhibitors but has no protease inhibitor activity and blocks voltage-gated potassium channels (Kv). The polypeptide is Kunitz-type serine protease inhibitor homolog beta-bungarotoxin BF B1 chain (Bungarus fasciatus (Banded krait)).